We begin with the raw amino-acid sequence, 475 residues long: Trigger factor (475 aa).

A PPIase FKBP-type domain is found at glycine 165–leucine 250. A compositionally biased stretch (basic and acidic residues) spans glutamate 439 to serine 466. The interval glutamate 439–alanine 475 is disordered.

It belongs to the FKBP-type PPIase family. Tig subfamily.

It localises to the cytoplasm. The enzyme catalyses [protein]-peptidylproline (omega=180) = [protein]-peptidylproline (omega=0). Its function is as follows. Involved in protein export. Acts as a chaperone by maintaining the newly synthesized protein in an open conformation. Functions as a peptidyl-prolyl cis-trans isomerase. The chain is Trigger factor from Bartonella tribocorum (strain CIP 105476 / IBS 506).